A 127-amino-acid chain; its full sequence is Thioredoxin domain-containing protein 8 (127 aa).

Positions 2–127 (VQKIKSMREF…KLEEKIQELM (126 aa)) constitute a Thioredoxin domain. Cysteine 32 and cysteine 35 are disulfide-bonded.

It belongs to the thioredoxin family. Testis-specific. Expressed in spermatozoa, sperm tail, elongated and round spermatids.

It is found in the cytoplasm. It localises to the golgi apparatus. Its function is as follows. May be required for post-translational modifications of proteins required for acrosomal biogenesis. May act by reducing disulfide bonds within the sperm. This is Thioredoxin domain-containing protein 8 (Txndc8) from Rattus norvegicus (Rat).